We begin with the raw amino-acid sequence, 318 residues long: Ornithine carbamoyltransferase (318 aa).

Carbamoyl phosphate is bound by residues 63-66 (STRT), Gln-90, Arg-114, and 141-144 (HPCQ). Residues Asn-172, Asp-235, and 239-240 (SM) contribute to the L-ornithine site. Residues 275–276 (CL) and Arg-303 each bind carbamoyl phosphate.

Belongs to the aspartate/ornithine carbamoyltransferase superfamily. OTCase family.

It is found in the cytoplasm. It carries out the reaction carbamoyl phosphate + L-ornithine = L-citrulline + phosphate + H(+). It participates in amino-acid biosynthesis; L-arginine biosynthesis; L-arginine from L-ornithine and carbamoyl phosphate: step 1/3. In terms of biological role, reversibly catalyzes the transfer of the carbamoyl group from carbamoyl phosphate (CP) to the N(epsilon) atom of ornithine (ORN) to produce L-citrulline. This is Ornithine carbamoyltransferase from Prochlorococcus marinus (strain MIT 9313).